Here is a 125-residue protein sequence, read N- to C-terminus: Holo-[acyl-carrier-protein] synthase (125 aa).

The Mg(2+) site is built by Asp-8 and Glu-57.

Belongs to the P-Pant transferase superfamily. AcpS family. Mg(2+) serves as cofactor.

Its subcellular location is the cytoplasm. The catalysed reaction is apo-[ACP] + CoA = holo-[ACP] + adenosine 3',5'-bisphosphate + H(+). In terms of biological role, transfers the 4'-phosphopantetheine moiety from coenzyme A to a Ser of acyl-carrier-protein. The sequence is that of Holo-[acyl-carrier-protein] synthase from Neisseria meningitidis serogroup C (strain 053442).